Here is a 142-residue protein sequence, read N- to C-terminus: Large ribosomal subunit protein uL13 (142 aa).

The protein belongs to the universal ribosomal protein uL13 family. In terms of assembly, part of the 50S ribosomal subunit.

In terms of biological role, this protein is one of the early assembly proteins of the 50S ribosomal subunit, although it is not seen to bind rRNA by itself. It is important during the early stages of 50S assembly. The sequence is that of Large ribosomal subunit protein uL13 from Polynucleobacter asymbioticus (strain DSM 18221 / CIP 109841 / QLW-P1DMWA-1) (Polynucleobacter necessarius subsp. asymbioticus).